The sequence spans 46 residues: MTQRTLRGTNRRRIRVSGFRARMRTASGRQVLRRRRAKGRYRLAVS.

The segment at 25–46 (TASGRQVLRRRRAKGRYRLAVS) is disordered. Positions 31–46 (VLRRRRAKGRYRLAVS) are enriched in basic residues.

This sequence belongs to the bacterial ribosomal protein bL34 family.

This Synechococcus sp. (strain JA-3-3Ab) (Cyanobacteria bacterium Yellowstone A-Prime) protein is Large ribosomal subunit protein bL34.